A 227-amino-acid chain; its full sequence is ATP-dependent Clp protease proteolytic subunit (227 aa).

Ser123 acts as the Nucleophile in catalysis. His148 is a catalytic residue.

This sequence belongs to the peptidase S14 family. Fourteen ClpP subunits assemble into 2 heptameric rings which stack back to back to give a disk-like structure with a central cavity, resembling the structure of eukaryotic proteasomes.

The protein localises to the cytoplasm. The enzyme catalyses Hydrolysis of proteins to small peptides in the presence of ATP and magnesium. alpha-casein is the usual test substrate. In the absence of ATP, only oligopeptides shorter than five residues are hydrolyzed (such as succinyl-Leu-Tyr-|-NHMec, and Leu-Tyr-Leu-|-Tyr-Trp, in which cleavage of the -Tyr-|-Leu- and -Tyr-|-Trp bonds also occurs).. Functionally, cleaves peptides in various proteins in a process that requires ATP hydrolysis. Has a chymotrypsin-like activity. Plays a major role in the degradation of misfolded proteins. This chain is ATP-dependent Clp protease proteolytic subunit, found in Chlorobium phaeobacteroides (strain DSM 266 / SMG 266 / 2430).